Here is a 708-residue protein sequence, read N- to C-terminus: Metabotropic glutamate receptor-like protein L (708 aa).

An N-terminal signal peptide occupies residues 1–24 (MKLIIKNLILLLVSCLYFLSNVSC). N-linked (GlcNAc...) asparagine glycans are attached at residues N21, N235, N310, and N366. At 25–370 (DQEVHMALLL…TTGSINKTFM (346 aa)) the chain is on the extracellular side. A helical membrane pass occupies residues 371–391 (AVSILEMAICLIIGIIVIFFF). Residues 392–401 (SRNINIIYST) lie on the Cytoplasmic side of the membrane. Residues 402-422 (IPYCLTILLGASLIAVAIFLW) form a helical membrane-spanning segment. The Extracellular portion of the chain corresponds to 423–435 (NLRDLNTQICTSK). Residues 436-456 (IWMASLGYNVLIGFIIIKSSL) form a helical membrane-spanning segment. Residues 457 to 479 (IYFKFKEMVKSKNEKISPIPFGR) lie on the Cytoplasmic side of the membrane. The helical transmembrane segment at 480–500 (IVLWFVPLLIIDCVLLIIYST) threads the bilayer. Over 501 to 531 (SGNPGKIDSLGLDGIGRYEYTQNCVNNLTGD) the chain is Extracellular. Residue N527 is glycosylated (N-linked (GlcNAc...) asparagine). Residues 532–552 (IILYIILVFHGLQLLYGCVIA) traverse the membrane as a helical segment. Residues 553 to 568 (WKTRVIDLEEFIEAHD) lie on the Cytoplasmic side of the membrane. The chain crosses the membrane as a helical span at residues 569–589 (FATAIYLITFCSFIIVILMVG). The Extracellular segment spans residues 590–597 (VTSTSNRN). A helical transmembrane segment spans residues 598–618 (TIISACAIFSSFSCVLIIFGA). At 619-708 (KFWKIYKPVE…SSRAAAQNDN (90 aa)) the chain is on the cytoplasmic side. The segment at 638-681 (KPQKSYSGSGGSGNSSGSKSKKTSAHSSTSGVKSGTSAPTQTSQ) is disordered. The segment covering 669 to 681 (VKSGTSAPTQTSQ) has biased composition (polar residues).

In the N-terminal section; belongs to the BMP lipoprotein family. This sequence in the C-terminal section; belongs to the G-protein coupled receptor 3 family. GABA-B receptor subfamily.

It localises to the membrane. The polypeptide is Metabotropic glutamate receptor-like protein L (far1) (Dictyostelium discoideum (Social amoeba)).